The sequence spans 493 residues: MSLLKMEYNLYTELKKMTCGQSLSLFNEDGDFVEVEPGSSFKFLIPKGFYSSPSVKTSLVFDTLTTTDNKITSINPTNAPKLYPIQCKVVSEVVSNMRKMIELKRPLYITLHLACGFGKTITTCYLMAIHGRKTVICVPNKMLIHQWKTQVEAVGLEHKISIDGVSILLKELKTQSPDVLIVVSRHLTNDAFCKYINKHYDLFILDESHTYNLMNNTAVTRFLAYYPPMMCYFLTATPRPSNRIYCNSIINIAKLSDLKKTIYVVDSFFEPYSTDNIRHMIKRLDGASNKYHIYTEKLLSVDEPRNQLILNTLVEEFKSGTINRILVITKLREHMVLFYKRLLNLFGPEVVFIGDAQNRRTPDMVKSIKELNRFIFVSTLFYSGTGLDIPSLDSLFICSAVINNMQIEQLLGRVCRETALLDRRVYVFPNTSIKEIKYMIGNFVQRIISLSVDKLGFKQESYRKHQESDPTSACTTSSREERVLNRIFNSQNR.

The Helicase ATP-binding domain maps to 100 to 256 (MIELKRPLYI…NSIINIAKLS (157 aa)). 113–120 (LACGFGKT) is a binding site for ATP. The short motif at 206–209 (DESH) is the DESH box element.

It belongs to the helicase family. Poxviruses subfamily. As to quaternary structure, interacts with G2. Might be part of a transcription complex composed at least of G2, A18, and H5.

Its subcellular location is the virion. Its function is as follows. DNA helicase which seems to act as a postreplicative transcription termination factor. Involved in ATP-dependent release of nascent RNA. Forms a stable complex with single-stranded DNA, and to a lesser extent RNA. The protein is Transcript termination protein A18 of Camelus.